We begin with the raw amino-acid sequence, 130 residues long: MYSTITRDIQITVLTEFVPERSDADESSFFWAYTVEIANQSDLTVQLTGRHWKITDANGKLEEVQGPGIVGEQPVLKPGETFRYTSGCPLTTPSGIMTGSYRMVTEKGDVFEAAIPVFSLDSPFSRQVLN.

Residues 3 to 127 (STITRDIQIT…FSLDSPFSRQ (125 aa)) enclose the ApaG domain.

The sequence is that of Protein ApaG from Beijerinckia indica subsp. indica (strain ATCC 9039 / DSM 1715 / NCIMB 8712).